The chain runs to 91 residues: MYVVVAYDITEDEVRNKVADALKAYGLERIQRSVFVGRINPALLKDLVERLKRITKGANADITIFKVDRRAIDTAIRIGPPPPARKNVDLY.

A Mg(2+)-binding site is contributed by Asp-8.

It belongs to the CRISPR-associated endoribonuclease Cas2 protein family. As to quaternary structure, homodimer, forms a heterotetramer with a Cas1 homodimer. It depends on Mg(2+) as a cofactor.

CRISPR (clustered regularly interspaced short palindromic repeat), is an adaptive immune system that provides protection against mobile genetic elements (viruses, transposable elements and conjugative plasmids). CRISPR clusters contain sequences complementary to antecedent mobile elements and target invading nucleic acids. CRISPR clusters are transcribed and processed into CRISPR RNA (crRNA). Functions as a ssRNA-specific endoribonuclease. Involved in the integration of spacer DNA into the CRISPR cassette. This chain is CRISPR-associated endoribonuclease Cas2 2, found in Pyrobaculum aerophilum (strain ATCC 51768 / DSM 7523 / JCM 9630 / CIP 104966 / NBRC 100827 / IM2).